The following is a 185-amino-acid chain: Ribosome-recycling factor (185 aa).

The protein belongs to the RRF family.

Its subcellular location is the cytoplasm. Its function is as follows. Responsible for the release of ribosomes from messenger RNA at the termination of protein biosynthesis. May increase the efficiency of translation by recycling ribosomes from one round of translation to another. This chain is Ribosome-recycling factor, found in Shouchella clausii (strain KSM-K16) (Alkalihalobacillus clausii).